Reading from the N-terminus, the 70-residue chain is Cold shock-like protein CspH (70 aa).

In terms of domain architecture, CSD spans 7–67; sequence GIVKTFDCKS…GLRGPTAANV (61 aa).

It is found in the cytoplasm. The protein is Cold shock-like protein CspH (cspH) of Salmonella typhi.